A 41-amino-acid chain; its full sequence is Cytochrome b559 subunit beta (41 aa).

A helical transmembrane segment spans residues 16–32 (WLAIHALAVPTVFFLGS). A heme-binding site is contributed by H20.

The protein belongs to the PsbE/PsbF family. As to quaternary structure, heterodimer of an alpha subunit and a beta subunit. PSII is composed of 1 copy each of membrane proteins PsbA, PsbB, PsbC, PsbD, PsbE, PsbF, PsbH, PsbI, PsbJ, PsbK, PsbL, PsbM, PsbT, PsbX, PsbY, PsbZ, Psb30/Ycf12, at least 3 peripheral proteins of the oxygen-evolving complex and a large number of cofactors. It forms dimeric complexes. Requires heme b as cofactor.

The protein localises to the plastid. It localises to the chloroplast thylakoid membrane. In terms of biological role, this b-type cytochrome is tightly associated with the reaction center of photosystem II (PSII). PSII is a light-driven water:plastoquinone oxidoreductase that uses light energy to abstract electrons from H(2)O, generating O(2) and a proton gradient subsequently used for ATP formation. It consists of a core antenna complex that captures photons, and an electron transfer chain that converts photonic excitation into a charge separation. This is Cytochrome b559 subunit beta from Oltmannsiellopsis viridis (Marine flagellate).